The sequence spans 695 residues: Follicle-stimulating hormone receptor (695 aa).

Positions 1–17 are cleaved as a signal peptide; sequence MALLLVALLAFLSLGSG. 2 disulfide bridges follow: C18-C25 and C23-C32. The LRRNT domain occupies 18-46; that stretch reads CHHRLCHCSNGVFLCQESKVTEIPSDLPR. The Extracellular segment spans residues 18 to 366; that stretch reads CHHRLCHCSN…EDIMGDDILR (349 aa). LRR repeat units lie at residues 49–72, 73–97, 98–118, 119–143, 144–169, 170–192, 193–216, 217–240, and 241–259; these read VELR…FGDL, EKIE…LPKL, HEIR…AFQN, LPNL…KIQS, LQKV…MGLS, FESM…AFNG, TQLD…VFQG, ASGP…GLEN, and LKKL…PSLE. Residues N191 and N199 are each glycosylated (N-linked (GlcNAc...) asparagine). Cystine bridges form between C275/C346, C276/C292, C276/C356, and C292/C338. N293 carries N-linked (GlcNAc...) asparagine glycosylation. At Y335 the chain carries Sulfotyrosine. Residues 367 to 387 traverse the membrane as a helical segment; the sequence is VLIWFISILAITGNILVLVIL. Topologically, residues 388–398 are cytoplasmic; that stretch reads ITSQYKLTVPR. Residues 399 to 421 traverse the membrane as a helical segment; the sequence is FLMCNLAFADLCIGIYLLLIASV. Residues 422-443 are Extracellular-facing; that stretch reads DVHTKTEYHNYAIDWQTGAGCD. The cysteines at positions 442 and 517 are disulfide-linked. The helical transmembrane segment at 444–465 threads the bilayer; it reads AAGFFTVFASELSVYTLTAITL. The Cytoplasmic portion of the chain corresponds to 466–485; sequence ERWHTITHAMQLECKVQLRH. Residues 486–508 form a helical membrane-spanning segment; the sequence is AASIMLVGWIFAFAVALFPIFGI. The Extracellular portion of the chain corresponds to 509–528; that stretch reads SSYMKVSICLPMDIDSPLSQ. Residues 529–550 traverse the membrane as a helical segment; sequence LYVMSLLVLNVLAFVVICGCYT. Residues 551–573 are Cytoplasmic-facing; it reads HIYLTVRNPNITSSSSDTKIAKR. The chain crosses the membrane as a helical span at residues 574 to 597; sequence MAMLIFTDFLCMAPISFFAISASL. The Extracellular portion of the chain corresponds to 598–608; the sequence is KVPLITVSKSK. A helical membrane pass occupies residues 609–630; that stretch reads ILLVLFYPINSCANPFLYAIFT. Residues 631–695 are Cytoplasmic-facing; the sequence is KNFRRDFFIL…LIPLRHLAKN (65 aa).

The protein belongs to the G-protein coupled receptor 1 family. FSH/LSH/TSH subfamily. Homotrimer. Functions as a homotrimer binding the FSH hormone heterodimer composed of CGA and FSHB. Interacts with ARRB2. Interacts with APPL2; interaction is independent of follicle stimulating hormone stimulation. In terms of processing, N-glycosylated; indirectly required for FSH-binding, possibly via a conformational change that allows high affinity binding of hormone. Post-translationally, sulfated.

The protein resides in the cell membrane. Functionally, g protein-coupled receptor for follitropin, the follicle-stimulating hormone. Through cAMP production activates the downstream PI3K-AKT and ERK1/ERK2 signaling pathways. In Bos taurus (Bovine), this protein is Follicle-stimulating hormone receptor (FSHR).